The following is a 294-amino-acid chain: MDPIDPELNEILDFTEYGPLTPIPQDDGENPLAKICYTTGYEQGMAYFRAIMAKKEYSLRALNLTGFLIMNNPAHYTVWAYRFQILNHTPSYIDNELEWLDEIAEDFQKNYQVWHHRQKILSLTKNYERELEFTKKMFEIDSKNYHVWSYRVWILQNFNDYSQELKLTNELLEKDIYNNSAWNHRFYVLFETSKVVSWSLEEELNYLKDKILFAPDNQSAWNYLCGVLDKSGPSKLDNLIANLRKNLPALHKPLLEFLAMYEPSSSEEIYQKLANEVDVPHAALWTWMSQRSNP.

5 PFTA repeats span residues 57-91 (YSLRALNLTGFLIMNNPAHYTVWAYRFQILNHTPS), 92-125 (YIDNELEWLDEIAEDFQKNYQVWHHRQKILSLTK), 126-160 (NYERELEFTKKMFEIDSKNYHVWSYRVWILQNFND), 161-194 (YSQELKLTNELLEKDIYNNSAWNHRFYVLFETSK), and 199-233 (SLEEELNYLKDKILFAPDNQSAWNYLCGVLDKSGP).

This sequence belongs to the protein prenyltransferase subunit alpha family. In terms of assembly, heterodimer of an alpha(cwp1) and a beta(cpp1 or cwg2) subunit. The cofactor is Mg(2+).

The enzyme catalyses L-cysteinyl-[protein] + (2E,6E)-farnesyl diphosphate = S-(2E,6E)-farnesyl-L-cysteinyl-[protein] + diphosphate. It catalyses the reaction geranylgeranyl diphosphate + L-cysteinyl-[protein] = S-geranylgeranyl-L-cysteinyl-[protein] + diphosphate. Its function is as follows. Catalyzes the transfer of a farnesyl or geranyl-geranyl moiety from farnesyl or geranyl-geranyl diphosphate to a cysteine at the fourth position from the C-terminus of several proteins having the C-terminal sequence Cys-aliphatic-aliphatic-X. The alpha(cwp1) subunit is thought to participate in a stable complex with the substrate. The beta(cpp1 or cwg2) subunits bind the peptide substrate. The chain is Protein farnesyltransferase/geranylgeranyltransferase type-1 subunit alpha (cwp1) from Schizosaccharomyces pombe (strain 972 / ATCC 24843) (Fission yeast).